We begin with the raw amino-acid sequence, 632 residues long: Chaperone protein HtpG (632 aa).

The segment at 1–339 is a; substrate-binding; sequence MTQQTMSFQA…SSDLPLNVSR (339 aa). Positions 340–559 are b; the sequence is EILQESRDVK…DNDMSGYLQR (220 aa). Residues 560 to 632 form a c region; it reads MLKAAGQSAP…TNALLLSRAA (73 aa).

The protein belongs to the heat shock protein 90 family. As to quaternary structure, homodimer.

It is found in the cytoplasm. In terms of biological role, molecular chaperone. Has ATPase activity. The polypeptide is Chaperone protein HtpG (Burkholderia mallei (strain NCTC 10247)).